Consider the following 364-residue polypeptide: Protein PTOV1 homolog (364 aa).

Positions alanine 187–valine 207 are disordered.

It belongs to the Mediator complex subunit 25 family. PTOV1 subfamily.

The sequence is that of Protein PTOV1 homolog from Drosophila melanogaster (Fruit fly).